The primary structure comprises 396 residues: Elongation factor Tu (396 aa).

The region spanning 10-205 (KPHVNIGTIG…AVDESIPDPV (196 aa)) is the tr-type G domain. The tract at residues 19-26 (GHVDHGKT) is G1. 19-26 (GHVDHGKT) is a binding site for GTP. Residue threonine 26 coordinates Mg(2+). Positions 62–66 (GITIN) are G2. A G3 region spans residues 83–86 (DAPG). GTP is bound by residues 83-87 (DAPGH) and 138-141 (NKAD). Residues 138–141 (NKAD) form a G4 region. The interval 175 to 177 (SAL) is G5.

The protein belongs to the TRAFAC class translation factor GTPase superfamily. Classic translation factor GTPase family. EF-Tu/EF-1A subfamily. Monomer.

It is found in the cytoplasm. The enzyme catalyses GTP + H2O = GDP + phosphate + H(+). Its function is as follows. GTP hydrolase that promotes the GTP-dependent binding of aminoacyl-tRNA to the A-site of ribosomes during protein biosynthesis. The sequence is that of Elongation factor Tu from Mycobacterium sp. (strain JLS).